Here is a 419-residue protein sequence, read N- to C-terminus: D-amino acid dehydrogenase (419 aa).

3–17 is an FAD binding site; that stretch reads VLILGGGVVGVTSAY.

This sequence belongs to the DadA oxidoreductase family. It depends on FAD as a cofactor.

It carries out the reaction a D-alpha-amino acid + A + H2O = a 2-oxocarboxylate + AH2 + NH4(+). Its pathway is amino-acid degradation; D-alanine degradation; NH(3) and pyruvate from D-alanine: step 1/1. Functionally, oxidative deamination of D-amino acids. The sequence is that of D-amino acid dehydrogenase from Methylobacterium radiotolerans (strain ATCC 27329 / DSM 1819 / JCM 2831 / NBRC 15690 / NCIMB 10815 / 0-1).